The primary structure comprises 267 residues: Phosphatidylcholine synthase (267 aa).

The Cytoplasmic segment spans residues 1 to 42; that stretch reads MILWRIVRPGAAMAYVQTGLVLIAEAMDTQQDSLKPRPAMRA. The helical transmembrane segment at 43 to 63 threads the bilayer; it reads AAFSVHVFTAFGAAIALLAML. Topologically, residues 64–69 are periplasmic; the sequence is EAVREH. A helical membrane pass occupies residues 70–90; the sequence is WAAMFQWLGVALIIDAIDGPI. Residues 91 to 102 are Cytoplasmic-facing; that stretch reads ARRLDVKNVQPN. Residues 103 to 123 traverse the membrane as a helical segment; that stretch reads WSGDVLDLVVDFVTYVFVPAY. A124 is a topological domain (periplasmic). Residues 125-145 form a helical membrane-spanning segment; the sequence is IVASGLLLPVAAPLLGVAIIV. Topologically, residues 146–162 are cytoplasmic; it reads TSALYFADLRMKADDNH. A helical membrane pass occupies residues 163 to 183; that stretch reads FRGFPALWNAAAFYLFLLHWP. Position 184 (P184) is a topological domain, periplasmic. Residues 185 to 205 form a helical membrane-spanning segment; it reads LWSTLLVAALVVLTFVPFHVL. At 206 to 215 the chain is on the cytoplasmic side; that stretch reads HPVRVVRLRW. A helical membrane pass occupies residues 216-236; the sequence is LTMSLIGIWAVLSLYTLDMDF. The Periplasmic segment spans residues 237-239; sequence RVG. A helical transmembrane segment spans residues 240-260; the sequence is PGVTLALCAIALWISFSDALI. The Cytoplasmic portion of the chain corresponds to 261-267; that stretch reads RFARSFA.

The protein belongs to the CDP-alcohol phosphatidyltransferase class-I family. The cofactor is Mn(2+).

Its subcellular location is the cell inner membrane. The enzyme catalyses a CDP-1,2-diacyl-sn-glycerol + choline = a 1,2-diacyl-sn-glycero-3-phosphocholine + CMP + H(+). Its function is as follows. Condenses choline with CDP-diglyceride to produce phosphatidylcholine and CMP. The polypeptide is Phosphatidylcholine synthase (Bradyrhizobium diazoefficiens (strain JCM 10833 / BCRC 13528 / IAM 13628 / NBRC 14792 / USDA 110)).